The chain runs to 408 residues: Protein BTN1 (408 aa).

Positions 1–30 (MSDKSHQIYCYFWLFGLINNVLYVVILSAA) are cleaved as a signal peptide. The next 7 membrane-spanning stretches (helical) occupy residues 42–62 (LVLLADIFPSLAIKLCSPFFI), 80–100 (LGMFLVSFKNLFVCLLGISFA), 128–148 (SGTGGAGIIGGASYMFLTSIF), 150–170 (VPVKLTLLVFSLLPFAFLFYF), 238–258 (TVYLFEYLINQAVAPTLLFPI), 323–343 (WFYVTHSPWAVMILIFYEGFL), and 369–389 (GAVSIADSFGVFLAALLGLGL).

This sequence belongs to the battenin family.

The protein localises to the vacuole membrane. Functionally, plays a role in vacuolar arginine transport. Involved in pH homeostasis. May be involved in ion homeostasis together with IST2. Not necessary for mitochondrial function or ATP synthase degradation. This chain is Protein BTN1 (YHC3), found in Saccharomyces cerevisiae (strain ATCC 204508 / S288c) (Baker's yeast).